Here is a 287-residue protein sequence, read N- to C-terminus: DDRGK domain-containing protein 1 (287 aa).

Residues 1–5 are Lumenal-facing; the sequence is MDLIL. A helical membrane pass occupies residues 6–26; the sequence is LLGIAVALLVILVTLFFFTKG. The Cytoplasmic segment spans residues 27-287; it reads KGSQESGKYN…LINLVPVSAE (261 aa). Disordered regions lie at residues 28 to 102 and 135 to 164; these read GSQE…KRAK and KVEAEKEAEEERKREEAEKKAREEKARQEH. Residues 44 to 68 are compositionally biased toward low complexity; that stretch reads AQAAPRRAQVVRNQRNRARVAAAPA. Over residues 85–102 the composition is skewed to basic and acidic residues; it reads IPHADFNGEKMGAKKRAK.

The protein belongs to the DDRGK1 family. As to quaternary structure, interacts with Atg9; the interaction is transient.

Its subcellular location is the endoplasmic reticulum membrane. In terms of biological role, substrate adapter for ufmylation, the covalent attachment of the ubiquitin-like modifier UFM1 to substrate proteins. Required for ufmylation of Atg9; protects the nervous system during aging, possibly by stabilizing Atg9 and supporting its function. The chain is DDRGK domain-containing protein 1 from Culex quinquefasciatus (Southern house mosquito).